Reading from the N-terminus, the 512-residue chain is Bifunctional purine biosynthesis protein PurH (512 aa).

One can recognise an MGS-like domain in the interval methionine 1–valine 146.

This sequence belongs to the PurH family.

It catalyses the reaction (6R)-10-formyltetrahydrofolate + 5-amino-1-(5-phospho-beta-D-ribosyl)imidazole-4-carboxamide = 5-formamido-1-(5-phospho-D-ribosyl)imidazole-4-carboxamide + (6S)-5,6,7,8-tetrahydrofolate. The enzyme catalyses IMP + H2O = 5-formamido-1-(5-phospho-D-ribosyl)imidazole-4-carboxamide. It participates in purine metabolism; IMP biosynthesis via de novo pathway; 5-formamido-1-(5-phospho-D-ribosyl)imidazole-4-carboxamide from 5-amino-1-(5-phospho-D-ribosyl)imidazole-4-carboxamide (10-formyl THF route): step 1/1. The protein operates within purine metabolism; IMP biosynthesis via de novo pathway; IMP from 5-formamido-1-(5-phospho-D-ribosyl)imidazole-4-carboxamide: step 1/1. The protein is Bifunctional purine biosynthesis protein PurH of Bacillus subtilis (strain 168).